The chain runs to 239 residues: Ribosomal RNA small subunit methyltransferase G (239 aa).

S-adenosyl-L-methionine is bound by residues glycine 77, phenylalanine 82, 128 to 129 (AE), and arginine 146. Positions 214–239 (IDKKRQTPKKYPRKPGTPNKTPLLEK) are disordered.

The protein belongs to the methyltransferase superfamily. RNA methyltransferase RsmG family.

The protein resides in the cytoplasm. Specifically methylates the N7 position of guanine in position 535 of 16S rRNA. This is Ribosomal RNA small subunit methyltransferase G from Staphylococcus aureus (strain Mu3 / ATCC 700698).